We begin with the raw amino-acid sequence, 332 residues long: Thiosulfate-binding protein (332 aa).

Positions 1–22 (MKRLFSASLLAAGLALGGAAHA) are cleaved as a signal peptide.

This sequence belongs to the prokaryotic sulfate-binding protein family.

The protein resides in the periplasm. Binds thiosulfate specifically and with high affinity. Has no detectable affinity for sulfate. The chain is Thiosulfate-binding protein from Pseudomonas aeruginosa (strain ATCC 15692 / DSM 22644 / CIP 104116 / JCM 14847 / LMG 12228 / 1C / PRS 101 / PAO1).